We begin with the raw amino-acid sequence, 1087 residues long: MADHVQSLAQLENLCKQLYETTDTTTRLQAEKALVEFTNSPDCLSKCQLLLERGSSSYSQLLAATCLTKLVSRTNNPLPLEQRIDIRNYVLNYLATRPKLATFVTQALIQLYARITKLGWFDCQKDDYVFRNAITDVTRFLQDSVEYCIIGVTILSQLTNEINQADTTHPLTKHRKIASSFRDSSLFDIFTLSCNLLKQASGKNLNLNDESQHGLLMQLLKLTHNCLNFDFIGTSTDESSDDLCTVQIPTSWRSAFLDSSTLQLFFDLYHSIPPSFSPLVLSCLVQIASVRRSLFNNAERAKFLSHLVDGVKRILENPQSLSDPNNYHEFCRLLARLKSNYQLGELVKVENYPEVIRLIANFTVTSLQHWEFAPNSVHYLLSLWQRLAASVPYVKATEPHMLETYTPEVTKAYITSRLESVHIILRDGLEDPLEDTGLVQQQLDQLSTIGRCEYEKTCALLVQLFDQSAQSYQELLQSASASPMDIAVQEGRLTWLVYIIGAVIGGRVSFASTDEQDAMDGELVCRVLQLMNLTDSRLAQAGNEKLELAMLSFFEQFRKIYIGDQVQKSSKLYRRLSEVLGLNDETMVLSVFIGKIITNLKYWGRCEPITSRTLQLLNDLSIGYSSVRKLVKLSAVQFMLNNHTSEHFSFLGINNQSNLTDMRCRTTFYTALGRLLMVDLGEDEDQYEQFMLPLTAAFEAVAQMFSTNSFNEQEAKRTLVGLVRDLRGIAFAFNAKTSFMMLFEWIYPSYMPILQRAIELWYHDPACTTPVLKLMAELVHNRSRRLQFDVSSPNGILLFRETSKMITMYGNRILTLGEVPKDQVYALKLKGISICFSMLKAALSGSYVNFGVFRLYGDDALDNALQTFIKLLLSIPHSDLLDYPKLSQSYYSLLEVLTQDHMNFIASLEPHVIMYILSSISEGLTALDTMVCTGCCSCLDHIVTYLFKQLSRSTKKRTTPLNQESDRFLHIMQQHPEMIQQMLSTVLNIIIFEDCRNQWSMSRPLLGLILLNEKYFSDLRNSIVNSQPPEKQQAMHLCFENLMEGIERNLLTKNRDRFTQNLSAFRREVNDSMKNSTYGVNSNDMMS.

The residue at position 2 (alanine 2) is an N-acetylalanine. The 67-residue stretch at 30 to 96 folds into the Importin N-terminal domain; it reads AEKALVEFTN…RNYVLNYLAT (67 aa). Serine 570 is subject to Phosphoserine.

This sequence belongs to the exportin family. As to quaternary structure, binds to nucleoporins. Found in a complex with XPO7, EIF4A1, ARHGAP1, VPS26A, VPS29, VPS35 and SFN. Interacts with ARHGAP1 and SFN. Interacts with Ran and cargo proteins in a GTP-dependent manner.

It is found in the cytoplasm. The protein resides in the nucleus. It localises to the nuclear pore complex. Functionally, mediates the nuclear export of proteins (cargos) with broad substrate specificity. In the nucleus binds cooperatively to its cargo and to the GTPase Ran in its active GTP-bound form. Docking of this trimeric complex to the nuclear pore complex (NPC) is mediated through binding to nucleoporins. Upon transit of a nuclear export complex into the cytoplasm, disassembling of the complex and hydrolysis of Ran-GTP to Ran-GDP (induced by RANBP1 and RANGAP1, respectively) cause release of the cargo from the export receptor. XPO7 then return to the nuclear compartment and mediate another round of transport. The directionality of nuclear export is thought to be conferred by an asymmetric distribution of the GTP- and GDP-bound forms of Ran between the cytoplasm and nucleus. This chain is Exportin-7 (XPO7), found in Pongo abelii (Sumatran orangutan).